Reading from the N-terminus, the 715-residue chain is Polyphosphate kinase (715 aa).

Residue Asn60 coordinates ATP. Positions 380 and 410 each coordinate Mg(2+). Residue His440 is the Phosphohistidine intermediate of the active site. ATP-binding residues include Tyr473, Arg569, and His597.

Belongs to the polyphosphate kinase 1 (PPK1) family. It depends on Mg(2+) as a cofactor. Post-translationally, an intermediate of this reaction is the autophosphorylated ppk in which a phosphate is covalently linked to a histidine residue through a N-P bond.

The enzyme catalyses [phosphate](n) + ATP = [phosphate](n+1) + ADP. Its function is as follows. Catalyzes the reversible transfer of the terminal phosphate of ATP to form a long-chain polyphosphate (polyP). The polypeptide is Polyphosphate kinase (Erythrobacter litoralis (strain HTCC2594)).